A 331-amino-acid polypeptide reads, in one-letter code: Tetraacyldisaccharide 4'-kinase (331 aa).

Residue 55-62 (SVGGNGKT) coordinates ATP.

It belongs to the LpxK family.

It carries out the reaction a lipid A disaccharide + ATP = a lipid IVA + ADP + H(+). The protein operates within glycolipid biosynthesis; lipid IV(A) biosynthesis; lipid IV(A) from (3R)-3-hydroxytetradecanoyl-[acyl-carrier-protein] and UDP-N-acetyl-alpha-D-glucosamine: step 6/6. Functionally, transfers the gamma-phosphate of ATP to the 4'-position of a tetraacyldisaccharide 1-phosphate intermediate (termed DS-1-P) to form tetraacyldisaccharide 1,4'-bis-phosphate (lipid IVA). This is Tetraacyldisaccharide 4'-kinase from Aeromonas salmonicida (strain A449).